A 265-amino-acid polypeptide reads, in one-letter code: MTDPSAHSAALTYGSYLALDELLAAQRPRSEEHDELLFIVVHQVYELWFKQVVHELTWLQERLHRGEGGHALATLKRVLTILKTVVAQVDVIETMTPRQFTAFRSRLEAASGFQSAQFRVLEAMLGRRDDRMLAPYPPDGPGYARIAAAMAAPSLFDSLLRYLATQGFETPVVPEPRPAGWRQPSEAVQRVLLEVYRADGEAALVCERFVDLDEGVQEWRYRHVKMVERTIGDKPGTGGSAGARYLRSTLFTPAFPDLWAVRGAL.

Substrate is bound by residues 38–42 (FIVVH) and Arg-104. His-223 serves as a coordination point for heme. Residue Thr-237 coordinates substrate.

The protein belongs to the tryptophan 2,3-dioxygenase family. In terms of assembly, homotetramer. Heme serves as cofactor.

It catalyses the reaction L-tryptophan + O2 = N-formyl-L-kynurenine. It functions in the pathway amino-acid degradation; L-tryptophan degradation via kynurenine pathway; L-kynurenine from L-tryptophan: step 1/2. Its function is as follows. Heme-dependent dioxygenase that catalyzes the oxidative cleavage of the L-tryptophan (L-Trp) pyrrole ring and converts L-tryptophan to N-formyl-L-kynurenine. Catalyzes the oxidative cleavage of the indole moiety. This chain is Tryptophan 2,3-dioxygenase, found in Anaeromyxobacter dehalogenans (strain 2CP-C).